The chain runs to 866 residues: Rifampicin phosphotransferase (866 aa).

The interval 1–313 (MSSLVLGLHE…FYIVQSRPIT (313 aa)) is ATP-binding. 8 residues coordinate ATP: Lys22, Arg116, Gly131, Thr135, Gln182, Glu296, Gln308, and Arg310. The tract at residues 326 to 754 (NHVYISVGHQ…TSDGEIVTGE (429 aa)) is rifampicin-binding. The disordered stretch occupies residues 410–429 (IPNDKTAPNPSRGNADMPAQ). The tract at residues 767–865 (GLPVSSGVIE…VHGTEGYIEI (99 aa)) is swivel phosphohistidine. His825 functions as the Tele-phosphohistidine intermediate in the catalytic mechanism.

It belongs to the rifampicin phosphotransferase family.

It catalyses the reaction rifampicin + ATP + H2O = 21-phosphorifampicin + AMP + phosphate + 2 H(+). Functionally, catalyzes the phosphorylation of rifampicin, also known as rifampin (RIF), leading to its inactivation. The sequence is that of Rifampicin phosphotransferase from Bacillus subtilis (strain 168).